Reading from the N-terminus, the 883-residue chain is Phosphoenolpyruvate carboxylase (883 aa).

Active-site residues include H138 and K546.

The protein belongs to the PEPCase type 1 family. Mg(2+) is required as a cofactor.

The enzyme catalyses oxaloacetate + phosphate = phosphoenolpyruvate + hydrogencarbonate. Forms oxaloacetate, a four-carbon dicarboxylic acid source for the tricarboxylic acid cycle. This Escherichia coli O45:K1 (strain S88 / ExPEC) protein is Phosphoenolpyruvate carboxylase.